A 448-amino-acid chain; its full sequence is Omega-6 fatty acid desaturase, chloroplastic (448 aa).

The N-terminal 69 residues, 1 to 69 (MASRIADSLF…VKRRIGCIKA (69 aa)), are a transit peptide targeting the chloroplast. Residue Val70 is modified to N-acetylvaline. The next 2 helical transmembrane spans lie at 124-144 (LKALKSVLISVTSYTLGLFMI) and 149-169 (WYLLPLAWAWTGTAITGFFVI). A Histidine box-1 motif is present at residues 171-175 (HDCAH). The short motif at 207–211 (HDRHH) is the Histidine box-2 element. The next 2 membrane-spanning stretches (helical) occupy residues 282 to 302 (VFAFMAVGWPLIVYKVGILGW) and 303 to 323 (VKFWLMPWLGYHFWMSTFTMV). Residues 367 to 371 (HIPHH) carry the Histidine box-3 motif.

This sequence belongs to the fatty acid desaturase type 1 family.

It localises to the plastid. It is found in the chloroplast inner membrane. The enzyme catalyses a (9Z)-octadecenoyl-containing glycerolipid + 2 reduced [2Fe-2S]-[ferredoxin] + O2 + 2 H(+) = a (9Z,12Z)-octadecadienoyl-containing glycerolipid + 2 oxidized [2Fe-2S]-[ferredoxin] + 2 H2O. The protein operates within lipid metabolism; polyunsaturated fatty acid biosynthesis. In terms of biological role, chloroplast omega-6 fatty acid desaturase introduces the second double bond in the biosynthesis of 16:3 and 18:3 fatty acids, important constituents of plant membranes. It is thought to use ferredoxin as an electron donor and to act on fatty acids esterified to galactolipids, sulfolipids and phosphatidylglycerol. In Arabidopsis thaliana (Mouse-ear cress), this protein is Omega-6 fatty acid desaturase, chloroplastic.